Reading from the N-terminus, the 477-residue chain is TNF receptor-associated factor family protein DDB_G0278133 (477 aa).

An RING-type; degenerate zinc finger spans residues 45-88 (CDICTLELFIESEPKALQCKEGHLACRRCWERYLSTNKQCMTCK). 2 TRAF-type zinc fingers span residues 160–211 (NHYK…SSLS) and 212–267 (DHHK…SKMQ). Residues 271 to 326 (LEHSVTKLMNQNEIIKKDNQNLDQEKKIEEIKLKLNNLLNNYIQLKNEIAVLKQNS) are a coiled coil. The region spanning 331 to 463 (VYSNKWIIPE…FLNEKGELEI (133 aa)) is the MATH domain.

The protein belongs to the TNF receptor-associated factor family. A subfamily.

Its subcellular location is the cytoplasm. Probable adapter protein and signal transducer that links members of the tumor necrosis factor receptor family to different signaling pathways by association with the receptor cytoplasmic domain and kinases. The chain is TNF receptor-associated factor family protein DDB_G0278133 from Dictyostelium discoideum (Social amoeba).